A 146-amino-acid polypeptide reads, in one-letter code: MLHQIKPFKGARKTVKRLGRGCGSGTGKTSGKGHKGQLARSGGGVRPGFEGGQIPFFQRIPKRGFHNINQKKYSIVNLGALEILENNTLVNQELLLEKKIIKSILPNGVKILSKGKLTKKLNFKVSKYSKKAQENIKLVGGNIEVN.

The tract at residues 1–46 is disordered; that stretch reads MLHQIKPFKGARKTVKRLGRGCGSGTGKTSGKGHKGQLARSGGGVR. Over residues 9–19 the composition is skewed to basic residues; sequence KGARKTVKRLG. The span at 20-30 shows a compositional bias: gly residues; it reads RGCGSGTGKTS.

Belongs to the universal ribosomal protein uL15 family. As to quaternary structure, part of the 50S ribosomal subunit.

Its function is as follows. Binds to the 23S rRNA. The polypeptide is Large ribosomal subunit protein uL15 (Phytoplasma mali (strain AT)).